A 515-amino-acid chain; its full sequence is FAD-dependent oxidoreductase domain-containing protein 1 homolog (515 aa).

A disordered region spans residues 18–37 (AGATSNGSGSSGGDKSGEDL). Residues 100–116 (VLIIGGGGVGSSIAYWL) form a helical membrane-spanning segment.

As to quaternary structure, associates with mitochondrial complex I assembly intermediates during its biogenesis. Requires FAD as cofactor.

Its subcellular location is the mitochondrion inner membrane. Its function is as follows. Involved in the assembly of the mitochondrial membrane respiratory chain NADH dehydrogenase (Complex I). The protein is FAD-dependent oxidoreductase domain-containing protein 1 homolog of Drosophila melanogaster (Fruit fly).